Consider the following 767-residue polypeptide: AMP deaminase 3 (767 aa).

Phosphoserine occurs at positions 85 and 107. Disordered regions lie at residues 89–111 (QMPP…PTTP) and 181–205 (LGHP…PLPQ). His317 and His319 together coordinate Zn(2+). Substrate-binding positions include His319 and 388-393 (KFNSKY). Residue His586 coordinates Zn(2+). Glu589 lines the substrate pocket. Residue His608 is the Proton acceptor of the active site. Asp663 contacts Zn(2+). 664 to 667 (DPMQ) contacts substrate.

The protein belongs to the metallo-dependent hydrolases superfamily. Adenosine and AMP deaminases family. As to quaternary structure, homotetramer. Zn(2+) serves as cofactor.

It carries out the reaction AMP + H2O + H(+) = IMP + NH4(+). The protein operates within purine metabolism; IMP biosynthesis via salvage pathway; IMP from AMP: step 1/1. AMP deaminase plays a critical role in energy metabolism. This Homo sapiens (Human) protein is AMP deaminase 3.